A 354-amino-acid chain; its full sequence is UPF0496 protein At4g34330 (354 aa).

The next 2 membrane-spanning stretches (helical) occupy residues 200–220 (IIFMATFATLVICSVLAATMA) and 222–242 (PHVAAALAAATPPVGSMGKWI). A coiled-coil region spans residues 270–341 (AVQDLNNIKD…CSTDIRRART (72 aa)).

The protein belongs to the UPF0496 family.

It localises to the membrane. The sequence is that of UPF0496 protein At4g34330 from Arabidopsis thaliana (Mouse-ear cress).